The following is a 387-amino-acid chain: Phosphoglycerate kinase (387 aa).

Substrate-binding positions include 21–23 (DLN), Arg36, 59–62 (HLGR), Arg113, and Arg146. ATP contacts are provided by residues Lys197, Glu314, and 340–343 (GGDT).

Belongs to the phosphoglycerate kinase family. As to quaternary structure, monomer.

Its subcellular location is the cytoplasm. The enzyme catalyses (2R)-3-phosphoglycerate + ATP = (2R)-3-phospho-glyceroyl phosphate + ADP. The protein operates within carbohydrate degradation; glycolysis; pyruvate from D-glyceraldehyde 3-phosphate: step 2/5. This chain is Phosphoglycerate kinase, found in Pectobacterium atrosepticum (strain SCRI 1043 / ATCC BAA-672) (Erwinia carotovora subsp. atroseptica).